A 295-amino-acid polypeptide reads, in one-letter code: GTPase Era (295 aa).

The Era-type G domain maps to 7–176; the sequence is KTISVCIIGR…IKSKAKVSPW (170 aa). Positions 15-22 are G1; sequence GRPNSGKS. 15–22 provides a ligand contact to GTP; sequence GRPNSGKS. Positions 41 to 45 are G2; the sequence is QTTRS. Residues 62–65 form a G3 region; it reads DTPG. GTP contacts are provided by residues 62-66 and 124-127; these read DTPGI and NKID. The segment at 124-127 is G4; sequence NKID. The segment at 152–154 is G5; it reads ISA. The KH type-2 domain occupies 204 to 281; sequence LQQELPYKLT…HLFLFVKVHA (78 aa).

It belongs to the TRAFAC class TrmE-Era-EngA-EngB-Septin-like GTPase superfamily. Era GTPase family. In terms of assembly, monomer.

The protein localises to the cytoplasm. The protein resides in the cell inner membrane. In terms of biological role, an essential GTPase that binds both GDP and GTP, with rapid nucleotide exchange. Plays a role in 16S rRNA processing and 30S ribosomal subunit biogenesis and possibly also in cell cycle regulation and energy metabolism. This Rickettsia typhi (strain ATCC VR-144 / Wilmington) protein is GTPase Era.